Consider the following 295-residue polypeptide: Nucleotide-binding protein EF_0766 (295 aa).

12 to 19 (GMSGAGKT) contributes to the ATP binding site. 62–65 (DLRS) serves as a coordination point for GTP.

Belongs to the RapZ-like family.

Its function is as follows. Displays ATPase and GTPase activities. This is Nucleotide-binding protein EF_0766 from Enterococcus faecalis (strain ATCC 700802 / V583).